The chain runs to 219 residues: Vesicle-associated membrane protein 711 (219 aa).

N-acetylalanine is present on Ala2. At 2–189 the chain is on the cytoplasmic side; that stretch reads AILYALVARG…RSNVWWRNCK (188 aa). The Longin domain occupies 7-111; sequence LVARGTVVLS…AMNEEFSRVL (105 aa). A v-SNARE coiled-coil homology domain is found at 126 to 186; sequence RINRIKGEMN…RRFRSNVWWR (61 aa). The chain crosses the membrane as a helical; Anchor for type IV membrane protein span at residues 190–210; that stretch reads LTVLLILLLLVIIYIAVAFLC. Topologically, residues 211-219 are vesicular; that stretch reads HGPTLPSCI.

The protein belongs to the synaptobrevin family. Expressed in flowers, leaves, stems and roots.

It localises to the vacuole membrane. The protein resides in the prevacuolar compartment membrane. Functionally, involved in the targeting and/or fusion of transport vesicles to their target membrane. The chain is Vesicle-associated membrane protein 711 from Arabidopsis thaliana (Mouse-ear cress).